We begin with the raw amino-acid sequence, 269 residues long: Bidirectional sugar transporter SWEET1a (269 aa).

The Extracellular portion of the chain corresponds to 1 to 6 (MEHIAR). The chain crosses the membrane as a helical span at residues 7-27 (FFFGVSGNVIALFLFLSPVVT). The MtN3/slv 1 domain occupies 8–96 (FFGVSGNVIA…IFLIFAVDRR (89 aa)). At 28-42 (FWRIIRKRSTEDFSG) the chain is on the cytoplasmic side. The helical transmembrane segment at 43-63 (VPYNMTLLNCLLSAWYGLPFV) threads the bilayer. Residues 64–72 (SPNNILVST) are Extracellular-facing. Residues 73 to 93 (INGTGSVIEAIYVVIFLIFAV) form a helical membrane-spanning segment. At 94 to 100 (DRRARLR) the chain is on the cytoplasmic side. Residues 101-121 (MLGLLSIVVSIFATVVLVSLL) form a helical membrane-spanning segment. Topologically, residues 122–129 (ALHGNARK) are extracellular. A helical transmembrane segment spans residues 130 to 150 (VFCGLAATIFSICMYASPLSI). A MtN3/slv 2 domain is found at 132-215 (CGLAATIFSI…ILYFIYRKNK (84 aa)). Topologically, residues 151–164 (MRLVIKTKSVEYMP) are cytoplasmic. A helical membrane pass occupies residues 165–185 (FLLSLAVFLCGTSWFIYGLLG). At 186-189 (RDPF) the chain is on the extracellular side. Residues 190-210 (IIIPNGCGSFLGLVQLILYFI) form a helical membrane-spanning segment. The Cytoplasmic portion of the chain corresponds to 211–269 (YRKNKGPAVPAGKGEAAAAADVEDAKKVAAAVEMADATTTNKAAADTVVGDGKVVASQV).

It belongs to the SWEET sugar transporter family. As to quaternary structure, forms homooligomers and/or heterooligomers.

Its subcellular location is the cell membrane. Functionally, mediates both low-affinity uptake and efflux of sugar across the plasma membrane. The protein is Bidirectional sugar transporter SWEET1a of Sorghum bicolor (Sorghum).